An 87-amino-acid polypeptide reads, in one-letter code: Acyl-CoA-binding protein (87 aa).

N-acetylserine is present on Ser-2. An ACB domain is found at 2-87 (SQAEFDKAAE…VEELKKKYGI (86 aa)). An N6-acetyllysine; alternate modification is found at Lys-8. Lys-8 is modified (N6-succinyllysine; alternate). Position 14 (Lys-14) interacts with an acyl-CoA. Lys-17 carries the post-translational modification N6-succinyllysine. Lys-19 carries the post-translational modification N6-acetyllysine. Phosphotyrosine is present on Tyr-29. An acyl-CoA-binding positions include 29-33 (YSHYK), Lys-51, Lys-55, and Tyr-74. Lys-51 bears the N6-acetyllysine mark. Lys-55 carries the post-translational modification N6-acetyllysine; alternate. Lys-55 bears the N6-succinyllysine; alternate mark. Position 55 is an N6-(2-hydroxyisobutyryl)lysine; alternate (Lys-55). Lys-55 bears the N6-malonyllysine; alternate mark. Lys-77 carries the N6-acetyllysine; alternate modification. Lys-77 is subject to N6-succinyllysine; alternate.

The protein belongs to the ACBP family. As to quaternary structure, monomer.

The protein localises to the endoplasmic reticulum. It localises to the golgi apparatus. Binds medium- and long-chain acyl-CoA esters with very high affinity and may function as an intracellular carrier of acyl-CoA esters. The protein is Acyl-CoA-binding protein (DBI) of Chaetophractus villosus (South American armadillo).